The sequence spans 146 residues: 3-hydroxyacyl-[acyl-carrier-protein] dehydratase FabZ (146 aa).

His48 is a catalytic residue.

This sequence belongs to the thioester dehydratase family. FabZ subfamily.

Its subcellular location is the cytoplasm. The enzyme catalyses a (3R)-hydroxyacyl-[ACP] = a (2E)-enoyl-[ACP] + H2O. In terms of biological role, involved in unsaturated fatty acids biosynthesis. Catalyzes the dehydration of short chain beta-hydroxyacyl-ACPs and long chain saturated and unsaturated beta-hydroxyacyl-ACPs. The polypeptide is 3-hydroxyacyl-[acyl-carrier-protein] dehydratase FabZ (Campylobacter lari (strain RM2100 / D67 / ATCC BAA-1060)).